The primary structure comprises 560 residues: Oxygen-dependent choline dehydrogenase (560 aa).

An FAD-binding site is contributed by 6 to 35 (DYIIIGGGSAGSVLGSRISEDVSNNVLVLE). The active-site Proton acceptor is His-472.

It belongs to the GMC oxidoreductase family. It depends on FAD as a cofactor.

It carries out the reaction choline + A = betaine aldehyde + AH2. The enzyme catalyses betaine aldehyde + NAD(+) + H2O = glycine betaine + NADH + 2 H(+). Its pathway is amine and polyamine biosynthesis; betaine biosynthesis via choline pathway; betaine aldehyde from choline (cytochrome c reductase route): step 1/1. Its function is as follows. Involved in the biosynthesis of the osmoprotectant glycine betaine. Catalyzes the oxidation of choline to betaine aldehyde and betaine aldehyde to glycine betaine at the same rate. The protein is Oxygen-dependent choline dehydrogenase of Staphylococcus saprophyticus subsp. saprophyticus (strain ATCC 15305 / DSM 20229 / NCIMB 8711 / NCTC 7292 / S-41).